The primary structure comprises 769 residues: Protein lethal(2)denticleless (769 aa).

WD repeat units lie at residues cysteine 99 to glutamate 129, glycine 143 to aspartate 174, glycine 194 to aspartate 249, arginine 264 to asparagine 303, asparagine 320 to asparagine 349, and glycine 362 to arginine 393. The segment at threonine 196–serine 221 is disordered. Phosphothreonine is present on threonine 201. At serine 204 the chain carries Phosphoserine. 3 disordered regions span residues arginine 448–arginine 467, alanine 476–threonine 562, and serine 655–aspartate 769. Threonine 456 is subject to Phosphothreonine. Serine 459 bears the Phosphoserine mark. A compositionally biased stretch (polar residues) spans proline 503 to isoleucine 518. Serine 524 bears the Phosphoserine mark. A compositionally biased stretch (basic and acidic residues) spans serine 524–serine 533. The segment covering serine 546–threonine 562 has biased composition (polar residues). At serine 655 the chain carries Phosphoserine. Over residues arginine 657–cysteine 666 the composition is skewed to polar residues. Residues serine 679, serine 691, and serine 711 each carry the phosphoserine modification. Over residues alanine 689–proline 704 the composition is skewed to low complexity. Polar residues predominate over residues threonine 705 to threonine 714. Positions proline 728–aspartate 743 are enriched in low complexity. Residues serine 758 to aspartate 769 show a composition bias toward polar residues.

Belongs to the WD repeat cdt2 family. As to quaternary structure, component of the DCX(DTL) E3 ubiquitin ligase complex, at least composed of Cul-4, pic/DDB1, l(2)dtl/CDT2 and Roc1a. As to expression, ubiquitously expressed during embryogenesis with no sign of tissue specificity in expression up to stage 17.

The protein resides in the cytoplasm. The protein operates within protein modification; protein ubiquitination. Functionally, substrate-specific adapter of a DCX (DDB1-CUL4-X-box) E3 ubiquitin-protein ligase complex required for cell cycle control. The DCX(DTL) complex, also named CRL4(CDT2) complex, mediates the polyubiquitination and subsequent degradation of E2f during S phase. E2f degradation is necessary to ensure proper development. Substrates require their interaction with PCNA for their polyubiquitination: substrates interact with PCNA via their PIP-box, leading to recruit the DCX(DTL) complex. The protein is Protein lethal(2)denticleless (l(2)dtl) of Drosophila melanogaster (Fruit fly).